We begin with the raw amino-acid sequence, 314 residues long: Ficolin-2 (314 aa).

The first 17 residues, 1–17, serve as a signal peptide directing secretion; that stretch reads MALGSAALFVLTLTVHA. The 57-residue stretch at 40-96 folds into the Collagen-like domain; sequence GCPGLPGAAGPKGEAGAKGDRGESGLPGIPGKEGPTGPKGNQGEKGIRGEKGDSGPS. Positions 49-101 are disordered; that stretch reads GPKGEAGAKGDRGESGLPGIPGKEGPTGPKGNQGEKGIRGEKGDSGPSQSCAT. The 218-residue stretch at 97-314 folds into the Fibrinogen C-terminal domain; that stretch reads QSCATGPRTC…KVSEMKVRLI (218 aa). Disulfide bonds link C99/C127 and C106/C134. Residues D250, D252, S254, and S256 each coordinate Ca(2+). C258 and C271 are oxidised to a cystine. Residue N301 is glycosylated (N-linked (GlcNAc...) asparagine).

Belongs to the ficolin lectin family. In terms of assembly, homotrimer. Interacts with elastin. Interacts with MASP1 and MASP2.

The protein resides in the secreted. Functionally, may function in innate immunity through activation of the lectin complement pathway. Calcium-dependent and GlcNAc-binding lectin. This is Ficolin-2 (Fcn2) from Mus musculus (Mouse).